We begin with the raw amino-acid sequence, 283 residues long: Undecaprenyl-diphosphatase (283 aa).

The next 7 helical transmembrane spans lie at 46-66 (PGVSVTAAIQLGSVAAVIAYF), 95-115 (VAMVIGTLPILVLGLGIKFFW), 127-147 (VPSIAIVSIVMALFLAMAECM), 154-174 (LGGVTGRDGFVVGLAQALAVI), 200-220 (FSFLLGIPAISIAGLVELKSA), 227-247 (AGPLPLLVGIFSAAVVSWLAI), and 259-279 (TWIFVGYRLVFGAGLLVWWAF).

The protein belongs to the UppP family.

It is found in the cell inner membrane. The enzyme catalyses di-trans,octa-cis-undecaprenyl diphosphate + H2O = di-trans,octa-cis-undecaprenyl phosphate + phosphate + H(+). Catalyzes the dephosphorylation of undecaprenyl diphosphate (UPP). Confers resistance to bacitracin. The polypeptide is Undecaprenyl-diphosphatase (Synechococcus sp. (strain CC9902)).